A 343-amino-acid polypeptide reads, in one-letter code: Tetraacyldisaccharide 4'-kinase (343 aa).

Residue Ser47–Thr54 participates in ATP binding.

This sequence belongs to the LpxK family.

The catalysed reaction is a lipid A disaccharide + ATP = a lipid IVA + ADP + H(+). Its pathway is glycolipid biosynthesis; lipid IV(A) biosynthesis; lipid IV(A) from (3R)-3-hydroxytetradecanoyl-[acyl-carrier-protein] and UDP-N-acetyl-alpha-D-glucosamine: step 6/6. Its function is as follows. Transfers the gamma-phosphate of ATP to the 4'-position of a tetraacyldisaccharide 1-phosphate intermediate (termed DS-1-P) to form tetraacyldisaccharide 1,4'-bis-phosphate (lipid IVA). The sequence is that of Tetraacyldisaccharide 4'-kinase from Flavobacterium psychrophilum (strain ATCC 49511 / DSM 21280 / CIP 103535 / JIP02/86).